A 215-amino-acid chain; its full sequence is Ras-related protein Rab-5A (215 aa).

Residues Ser29, Ala30, Gly32, Lys33, Ser34, Ser35, His46, Glu47, Thr52, and Gly78 each contribute to the GTP site. Ser34 contacts Mg(2+). 2 short sequence motifs (switch) span residues 44–56 and 77–93; these read QFHEFQESTIGAA and AGQERYHSLAPMYYRGA. Mg(2+) is bound at residue Thr52. Ser84 is subject to Phosphoserine. Asn133, Lys134, Asp136, Ala164, and Lys165 together coordinate GTP. Positions 181-215 are disordered; it reads LPKNEPQNPGANSARGRGVDLTEPTQPTRSQCCSN. The span at 203–215 shows a compositional bias: polar residues; the sequence is EPTQPTRSQCCSN. Residues Cys212 and Cys213 are each lipidated (S-geranylgeranyl cysteine).

This sequence belongs to the small GTPase superfamily. Rab family. As to quaternary structure, interacts with GDI1; this promotes dissociation from membranes; phosphorylation at Ser-84 disrupts this interaction. Interacts with GDI2; phosphorylation at Ser-84 disrupts the interaction. Binds EEA1. Interacts with ALS2CL, SUN2, ZFYVE20 and RUFY1. Interacts with RIN1 and GAPVD1, which regulate its pathway, probably by acting as a GEF. Interacts with SGSM1 and SGSM3. Interacts with PIK3CB. Interacts with RABEP1 and RINL. Interacts with OCRL and INPP5F. May be a component of a complex composed of RAB5A, DYN2 and PIK3C3. Does not interact with the BLOC-3 complex (heterodimer of HPS1 and HPS4). Interacts with CLN5. Interacts with APPL2. Interacts with F8A1/F8A2/F8A3. Found in a complex with F8A1/F8A2/F8A3, HTT and RAB5A; mediates the recruitment of HTT by RAB5A onto early endosomes. Interacts with ATP9A. Interacts with PPP1R21; mediates the recruitment of FERRY complex by RAB5A onto early endosomes. It depends on Mg(2+) as a cofactor. In terms of processing, phosphorylation of Ser-84 in the switch II region by LRRK2 prevents the association of RAB regulatory proteins, including RAB GDP dissociation inhibitors GDI1 and GDI2.

It is found in the cell membrane. The protein resides in the early endosome membrane. Its subcellular location is the melanosome. It localises to the cytoplasmic vesicle. The protein localises to the cell projection. It is found in the ruffle. The protein resides in the cytoplasm. Its subcellular location is the cytosol. It localises to the membrane. The protein localises to the phagosome membrane. It is found in the endosome membrane. It carries out the reaction GTP + H2O = GDP + phosphate + H(+). Its activity is regulated as follows. Regulated by guanine nucleotide exchange factors (GEFs) including RINL, which promote the exchange of bound GDP for free GTP. Regulated by GTPase activating proteins (GAPs) which increase the GTP hydrolysis activity. Inhibited by GDP dissociation inhibitors (GDIs). Functionally, the small GTPases Rab are key regulators of intracellular membrane trafficking, from the formation of transport vesicles to their fusion with membranes. Rabs cycle between an inactive GDP-bound form and an active GTP-bound form that is able to recruit to membranes different sets of downstream effectors directly responsible for vesicle formation, movement, tethering and fusion. RAB5A is required for the fusion of plasma membranes and early endosomes. Contributes to the regulation of filopodia extension. Required for the exosomal release of SDCBP, CD63, PDCD6IP and syndecan. Regulates maturation of apoptotic cell-containing phagosomes, probably downstream of DYN2 and PIK3C3. The polypeptide is Ras-related protein Rab-5A (RAB5A) (Canis lupus familiaris (Dog)).